Here is a 420-residue protein sequence, read N- to C-terminus: Glucose-1-phosphate adenylyltransferase (420 aa).

Residues Tyr-107, Gly-173, 188–189, and Ser-206 contribute to the alpha-D-glucose 1-phosphate site; that span reads EK.

The protein belongs to the bacterial/plant glucose-1-phosphate adenylyltransferase family. As to quaternary structure, homotetramer.

The catalysed reaction is alpha-D-glucose 1-phosphate + ATP + H(+) = ADP-alpha-D-glucose + diphosphate. Its pathway is glycan biosynthesis; glycogen biosynthesis. Its function is as follows. Involved in the biosynthesis of ADP-glucose, a building block required for the elongation reactions to produce glycogen. Catalyzes the reaction between ATP and alpha-D-glucose 1-phosphate (G1P) to produce pyrophosphate and ADP-Glc. This is Glucose-1-phosphate adenylyltransferase from Shewanella baltica (strain OS185).